The primary structure comprises 325 residues: Glutarate 2-hydroxylase (325 aa).

Fe cation is bound by residues His160, Asp162, and His292.

This sequence belongs to the glutarate hydroxylase family. Homotetramer. Fe(2+) is required as a cofactor.

It carries out the reaction glutarate + 2-oxoglutarate + O2 = (S)-2-hydroxyglutarate + succinate + CO2. Its pathway is amino-acid degradation. Acts as an alpha-ketoglutarate-dependent dioxygenase catalyzing hydroxylation of glutarate (GA) to L-2-hydroxyglutarate (L2HG). Functions in a L-lysine degradation pathway that proceeds via cadaverine, glutarate and L-2-hydroxyglutarate. In Escherichia coli O127:H6 (strain E2348/69 / EPEC), this protein is Glutarate 2-hydroxylase.